A 549-amino-acid polypeptide reads, in one-letter code: Oxygen-dependent choline dehydrogenase (549 aa).

An FAD-binding site is contributed by 4–33; the sequence is DFVIIGSGSAGSALAYRLSEGGKNSVIVIE. Histidine 465 acts as the Proton acceptor in catalysis.

The protein belongs to the GMC oxidoreductase family. FAD is required as a cofactor.

It catalyses the reaction choline + A = betaine aldehyde + AH2. It carries out the reaction betaine aldehyde + NAD(+) + H2O = glycine betaine + NADH + 2 H(+). The protein operates within amine and polyamine biosynthesis; betaine biosynthesis via choline pathway; betaine aldehyde from choline (cytochrome c reductase route): step 1/1. Involved in the biosynthesis of the osmoprotectant glycine betaine. Catalyzes the oxidation of choline to betaine aldehyde and betaine aldehyde to glycine betaine at the same rate. In Rhizobium johnstonii (strain DSM 114642 / LMG 32736 / 3841) (Rhizobium leguminosarum bv. viciae), this protein is Oxygen-dependent choline dehydrogenase.